The chain runs to 515 residues: 2-isopropylmalate synthase (515 aa).

A Pyruvate carboxyltransferase domain is found at Val-5–His-267. Positions 14, 202, 204, and 238 each coordinate Mn(2+). Residues Lys-392–Val-515 are regulatory domain.

The protein belongs to the alpha-IPM synthase/homocitrate synthase family. LeuA type 1 subfamily. In terms of assembly, homodimer. It depends on Mn(2+) as a cofactor.

It is found in the cytoplasm. The catalysed reaction is 3-methyl-2-oxobutanoate + acetyl-CoA + H2O = (2S)-2-isopropylmalate + CoA + H(+). Its pathway is amino-acid biosynthesis; L-leucine biosynthesis; L-leucine from 3-methyl-2-oxobutanoate: step 1/4. Its function is as follows. Catalyzes the condensation of the acetyl group of acetyl-CoA with 3-methyl-2-oxobutanoate (2-ketoisovalerate) to form 3-carboxy-3-hydroxy-4-methylpentanoate (2-isopropylmalate). This is 2-isopropylmalate synthase from Aliivibrio fischeri (strain MJ11) (Vibrio fischeri).